Consider the following 137-residue polypeptide: Ribonuclease kappa (137 aa).

The next 2 helical transmembrane spans lie at 52 to 72 and 104 to 124; these read ACGI…GIFF and VSYN…FSFC.

This sequence belongs to the RNase K family. As to quaternary structure, interacts with the proton translocation complex V0 of the V-ATPase. Interacts with ATP6AP1. Widely expressed.

The protein localises to the endomembrane system. It localises to the cytoplasmic vesicle. It is found in the clathrin-coated vesicle membrane. Endoribonuclease which preferentially cleaves ApU and ApG phosphodiester bonds. Hydrolyzes UpU bonds at a lower rate. Regulates the activity of vacuolar (H+)-ATPase (V-ATPase) which is responsible for acidifying and maintaining the pH of intracellular compartments. Required at an early stage of receptor-mediated endocytosis. Functionally, (Microbial infection) Required at an early stage of both clathrin-mediated and clathrin-independent endocytic uptake of a diverse set of viruses, including dengue, West Nile, Sindbis, Rift Valley Fever, influenza, and human rhinoviruses. In Homo sapiens (Human), this protein is Ribonuclease kappa (RNASEK).